Reading from the N-terminus, the 336-residue chain is NADH-quinone oxidoreductase subunit H (336 aa).

The next 8 helical transmembrane spans lie at 14–34 (IIVA…AFLV), 82–102 (IIFL…WAVI), 115–135 (VGIL…IMAG), 161–181 (IGLV…SDVV), 186–206 (TVWF…SALA), 247–267 (ILMS…PLDV), 273–293 (VPGP…FVWV), and 312–332 (VFLP…VTFD).

It belongs to the complex I subunit 1 family. In terms of assembly, NDH-1 is composed of 14 different subunits. Subunits NuoA, H, J, K, L, M, N constitute the membrane sector of the complex.

The protein localises to the cell inner membrane. It catalyses the reaction a quinone + NADH + 5 H(+)(in) = a quinol + NAD(+) + 4 H(+)(out). In terms of biological role, NDH-1 shuttles electrons from NADH, via FMN and iron-sulfur (Fe-S) centers, to quinones in the respiratory chain. The immediate electron acceptor for the enzyme in this species is believed to be ubiquinone. Couples the redox reaction to proton translocation (for every two electrons transferred, four hydrogen ions are translocated across the cytoplasmic membrane), and thus conserves the redox energy in a proton gradient. This subunit may bind ubiquinone. The protein is NADH-quinone oxidoreductase subunit H of Rhodospirillum centenum (strain ATCC 51521 / SW).